An 86-amino-acid chain; its full sequence is MYPAVVLLLLLLVEQAAALGEPQLCYILDAILFLYGIILTLLYCRLKIQVRKATVASYEKPDGIYTGLSTRNQETYETLKHEKPPQ.

Residues 1 to 18 (MYPAVVLLLLLLVEQAAA) form the signal peptide. The Extracellular portion of the chain corresponds to 19–23 (LGEPQ). Residues 24–44 (LCYILDAILFLYGIILTLLYC) form a helical membrane-spanning segment. The Cytoplasmic portion of the chain corresponds to 45–86 (RLKIQVRKATVASYEKPDGIYTGLSTRNQETYETLKHEKPPQ). Residues 54–82 (TVASYEKPDGIYTGLSTRNQETYETLKHE) enclose the ITAM domain. At Tyr-65 the chain carries Phosphotyrosine. At Ser-69 the chain carries Phosphoserine. Tyr-76 bears the Phosphotyrosine mark. Position 78 is a phosphothreonine (Thr-78).

The protein belongs to the CD3Z/FCER1G family. As to quaternary structure, igE Fc receptor is a tetramer of an alpha chain, a beta chain, and two disulfide linked gamma chains. Associates with FCGR1A; forms a functional signaling complex. The signaling subunit of immunoglobulin gamma (IgG) Fc receptor complex. As a homodimer or a heterodimer of CD247 and FCER1G, associates with the ligand binding subunit FCGR3A to form a functional receptor complex. Associates with CLEC6A. Interacts with CLEC4E. Interacts (via ITAM domain) with SYK (via SH2 domains); activates SYK, enabling integrin-mediated activation of neutrophils and macrophages. Interacts with CSF2RB and recruits SYK in response to IL3 stimulation; this interaction is direct. Interacts with CD300LH; the interaction may be indirect. Interacts with CD300LD. Interacts with TARM1.

The protein localises to the cell membrane. In terms of biological role, adapter protein containing an immunoreceptor tyrosine-based activation motif (ITAM) that transduces activation signals from various immunoreceptors. As a component of the high-affinity immunoglobulin E (IgE) receptor, mediates allergic inflammatory signaling in mast cells. As a constitutive component of interleukin-3 receptor complex, selectively mediates interleukin 4/IL4 production by basophils priming T-cells toward effector T-helper 2 subset. Associates with pattern recognition receptors CLEC4D and CLEC4E to form a functional signaling complex in myeloid cells. Binding of mycobacterial trehalose 6,6'-dimycolate (TDM) to this receptor complex leads to phosphorylation of ITAM, triggering activation of SYK, CARD9 and NF-kappa-B, consequently driving maturation of antigen-presenting cells and shaping antigen-specific priming of T-cells toward effector T-helper 1 and T-helper 17 cell subtypes. May function cooperatively with other activating receptors. Functionally linked to integrin beta-2/ITGB2-mediated neutrophil activation. Also involved in integrin alpha-2/ITGA2-mediated platelet activation. This chain is High affinity immunoglobulin epsilon receptor subunit gamma (FCER1G), found in Cavia porcellus (Guinea pig).